The following is a 451-amino-acid chain: MPIHIGSSIPLMVEKMLTEMVKPSKHIPQQTLNLSTLDNDPYNEVIYKACYVFKAKNVADDDNRPEALLREALSDLLGYYYPLSGSLKRQESDRKLQLSCGGDGGGVPFTVATANVELSSLKNLENIDSDTALNFLPVLHVDIDGYRPFALQVTKFECGGFILGMAMSHAMCDGYGEGHIMCALTDLAGGKKKPMVTPIWERERLVGKPEDDQPPFVPGDDTAASPYLPTDDWVTEKITIRADSIRRLKEATLKEYDFSNETITTFEVIGAYLWKSRVKALNLDRDGVTVLGLSVGIRNVVDPPLPDGYYGNAYIDMYVPLTAREVEEFTISDIVKLIKEAKRNAHDKDYLQEELANTEKIIKMNLTIKGKKDGLFCLTDWRNIGIFGSMDFGWDEPVNIVPVVPSETARTVNMFMRPSRLESDMVGGVQIVVTLPRIAMVKFKEEMEALE.

Spermidine is bound by residues tyrosine 47, histidine 169, serine 294, aspartate 316, and leucine 378. The active-site Proton acceptor is the histidine 169. The active-site Proton acceptor is aspartate 391.

The protein belongs to the plant acyltransferase family. As to quaternary structure, monomer. In terms of tissue distribution, predominantly expressed in siliques, especially in seeds around the embryo, and, at low levels, in flowers. Barely detectable in stems, leaves, and roots.

It catalyses the reaction 2 (E)-sinapoyl-CoA + spermidine = N(1),N(8)-bis[(E)-sinapoyl]-spermidine + 2 CoA + 2 H(+). Its pathway is amine and polyamine metabolism; spermidine metabolism. Spermidine sinapoyl-CoA acyltransferase that mediates the accumulation of disinapoyl spermidine conjugates in seeds. Catalyzes the two conjugating steps required for the biosynthesis of N1,N8-disipanoyl-spermidine. Can also use putrescine as an acyl acceptor to convert it into monosinapoyl-putrescine. The polypeptide is Spermidine sinapoyl-CoA acyltransferase (Arabidopsis thaliana (Mouse-ear cress)).